Consider the following 357-residue polypeptide: Peptide chain release factor 1 (357 aa).

Position 236 is an N5-methylglutamine (glutamine 236).

It belongs to the prokaryotic/mitochondrial release factor family. In terms of processing, methylated by PrmC. Methylation increases the termination efficiency of RF1.

It is found in the cytoplasm. Functionally, peptide chain release factor 1 directs the termination of translation in response to the peptide chain termination codons UAG and UAA. The protein is Peptide chain release factor 1 of Mycolicibacterium vanbaalenii (strain DSM 7251 / JCM 13017 / BCRC 16820 / KCTC 9966 / NRRL B-24157 / PYR-1) (Mycobacterium vanbaalenii).